Here is a 410-residue protein sequence, read N- to C-terminus: Transcription factor Dp-1 (410 aa).

Lys-3 bears the N6-acetyllysine mark. Position 23 is a phosphoserine; by CDK2 (Ser-23). Positions 77–114 are disordered; that stretch reads VVGSPHTPNTHFVSQNQPSDPSPWSAGKRNRKGEKNGK. Residues 82 to 95 show a composition bias toward polar residues; that stretch reads HTPNTHFVSQNQPS. Positions 104–114 are enriched in basic residues; sequence KRNRKGEKNGK. The interaction with CEBPA stretch occupies residues 105–127; sequence RNRKGEKNGKGLRHFSMKVCEKV. A DNA-binding region spans residues 113 to 195; the sequence is GKGLRHFSMK…KKEIKWIGLP (83 aa). The DEF box motif lies at 161–195; it reads DQKNIRRRVYDALNVLMAMNIISKEKKEIKWIGLP. The interval 204 to 277 is dimerization; the sequence is SLEVERQRRL…KKTVIDCSIS (74 aa). Residues 211 to 327 are enhances binding of RB protein to E2F; that stretch reads RRLERIKQKQ…DLRVARSLVP (117 aa). Positions 214–246 are DCB1; the sequence is ERIKQKQSQLQELILQQIAFKNLVQRNRQVEQQ. The interval 259–315 is DCB2; that stretch reads LPFIIVNTSKKTVIDCSISNDKFEYLFNFDNTFEIHDDIEVLKRMGMACGLESGSCS. The tract at residues 370–410 is disordered; that stretch reads GALATSSSGSQYSGSRVETPVSCVGEDDEDDEDFNENEEED. Low complexity predominate over residues 375-384; it reads SSSGSQYSGS. Residues 394-410 are compositionally biased toward acidic residues; the sequence is GEDDEDDEDFNENEEED.

Belongs to the E2F/DP family. As to quaternary structure, component of the E2F:DP transcription factor complex. Forms heterodimers with E2F family members. The complex can interact with hypophosphorylated retinoblastoma protein RB1 and related proteins (RBL1 and RBL2) that inhibit the E2F transactivation domain. This repression involves recruitment of histone deacetylase (HDAC). During the cell cycle, from mid-to-late G1 phase, RB family members become phosphorylated, detach from the DRTF1/E2F complex to render E2F transcriptionally active. Part of the E2F6.com-1 complex in G0 phase is composed of E2F6, MGA, MAX, TFDP1, CBX3, BAT8, EUHMTASE1, RING1, RNF2, MBLR, L3MBTL2 YAF2. Component of the DREAM complex (also named LINC complex) at least composed of E2F4, E2F5, LIN9, LIN37, LIN52, LIN54, MYBL1, MYBL2, RBL1, RBL2, RBBP4, TFDP1 and TFDP2. The complex exists in quiescent cells where it represses cell cycle-dependent genes. It dissociates in S phase when LIN9, LIN37, LIN52 and LIN54 form a subcomplex that binds to MYBL2. The complex TFDP1:E2F1 interacts with CEBPA; the interaction prevents CEBPA binding to target gene promoters and represses its transcriptional activity. Post-translationally, ubiquitinated by the BCR(KBTBD5) complex, leading to its subsequent degradation. In terms of processing, phosphorylation by E2F1-bound cyclin A-CDK2, in the S phase, inhibits E2F-mediated DNA binding and transactivation.

It is found in the nucleus. The protein localises to the cytoplasm. In terms of biological role, can stimulate E2F-dependent transcription. Binds DNA cooperatively with E2F family members through the E2 recognition site, 5'-TTTC[CG]CGC-3', found in the promoter region of a number of genes whose products are involved in cell cycle regulation or in DNA replication. The E2F1:DP complex appears to mediate both cell proliferation and apoptosis. Blocks adipocyte differentiation by repressing CEBPA binding to its target gene promoters. The chain is Transcription factor Dp-1 (TFDP1) from Bos taurus (Bovine).